We begin with the raw amino-acid sequence, 564 residues long: MIKADNALLLEEPLLRVPYEMLRKNLKTVHKHMTQESTMVEQTLSKLQQSTQHVAAEYGEKQQEEARESLDQLISRVRGLKRKIATLKDEQNETLTTTKARVEHLNVIFDNEKETDPEKQKETEKKWLRTRLERLLTDYFLRQGFSETAKSFAQNRGITSLVDVTILDQCISVETSLRQRHSTAECLAWCSENRSFLRKTRSSLEFEVRLQHYVELVKSGRVEDALKYCQRFLSKNADIHLREIQQAAGLLAFPPGTEGSPYKDLYACERWNQLSRKFVQTFADVHGLSDGSSLLYTLSTGLSVLKTHSCRNFGAPAELPITADKDEDMDPSLTSSARPYARRSENLPSVFGSGFSIRMYGSDEIRGLDTLPVIPPRALANLSSMRRDIAMQNNLDLEESIEDDNEESEERTSGDGERDSDGAVPVEELEELPDAPPELLSAEYLARRIEEATKENTDIIPKTTLDMFNHFYPGCCTSHQLSRADACPVCSVELNSLAENLPYAHHIRSHLDADPVVLPNSRIFGRAKLMEYSHKMMKAAPNTVVDPTSFECFKIDELITAYPS.

In terms of domain architecture, LisH spans 128–160 (LRTRLERLLTDYFLRQGFSETAKSFAQNRGITS). The 59-residue stretch at 166–224 (ILDQCISVETSLRQRHSTAECLAWCSENRSFLRKTRSSLEFEVRLQHYVELVKSGRVED) folds into the CTLH domain. Disordered regions lie at residues 322–341 (TADKDEDMDPSLTSSARPYA) and 396–422 (DLEESIEDDNEESEERTSGDGERDSDG). A compositionally biased stretch (acidic residues) spans 396–409 (DLEESIEDDNEESE). A compositionally biased stretch (basic and acidic residues) spans 410–421 (ERTSGDGERDSD). Residues 487 to 549 (CPVCSVELNS…APNTVVDPTS (63 aa)) form an RING-Gid-type zinc finger.

Belongs to the FYV10 family.

It is found in the cytoplasm. It localises to the nucleus. Its function is as follows. Involved in the proteasome-dependent degradation of fructose-1,6-bisphosphatase. This Yarrowia lipolytica (strain CLIB 122 / E 150) (Yeast) protein is Protein FYV10 (FYV10).